Here is a 602-residue protein sequence, read N- to C-terminus: MKTKAPMKNIRNFSIIAHIDHGKSTLADCLISECNAISNREMKSQVMDTMDIEKERGITIKAQSVRLNYTFKGEDYVLNLIDTPGHVDFSYEVSRSLCSCEGALLVVDATQGVEAQTIANTYIALDNHLEILPVINKIDLPNANVLEVKQDIEDTIGIDCSNTNEVSAKARLGIKDLLEKIITTIPAPSGDFNAPLKALIYDSWFDNYLGALALVRIMDGSINTEQEILVMGTGKKHGVLGLYYPNPLKKIPTKSLECGEIGIVSLGLKSVTDIAVGDTLTDAKNPTSKPIEGFMPAKPFVFAGLYPIETDRFEDLREALLKLQLNDCALNFEPESSVALGFGFRVGFLGLLHMEVIKERLEREFGLNLIATAPTVVYEVHLTDNSIKYVQNPSELPPENCIACIKEPFVRATIITPSEFLGNLMQLLNNKRGIQEKMEYLNQSRVMLTYSLPSNEIVMDFYDKLKSCTKGYASFDYEPIENREANLVKLDVRVAGDVVDALSIIIDKNKAYEKGRALVETMKELIPRQLFEVAIQASVGNKIIARETIKSVGKNVTAKCYGGDITRKRKLLEKQKEGKKRMKAIGKVELPQEAFLAILKID.

The tr-type G domain maps to 8-189; sequence KNIRNFSIIA…KIITTIPAPS (182 aa). Residues 20 to 25 and 136 to 139 each bind GTP; these read DHGKST and NKID.

It belongs to the TRAFAC class translation factor GTPase superfamily. Classic translation factor GTPase family. LepA subfamily.

Its subcellular location is the cell inner membrane. The enzyme catalyses GTP + H2O = GDP + phosphate + H(+). Its function is as follows. Required for accurate and efficient protein synthesis under certain stress conditions. May act as a fidelity factor of the translation reaction, by catalyzing a one-codon backward translocation of tRNAs on improperly translocated ribosomes. Back-translocation proceeds from a post-translocation (POST) complex to a pre-translocation (PRE) complex, thus giving elongation factor G a second chance to translocate the tRNAs correctly. Binds to ribosomes in a GTP-dependent manner. The chain is Elongation factor 4 from Helicobacter pylori (strain ATCC 700392 / 26695) (Campylobacter pylori).